The following is a 506-amino-acid chain: COP9 signalosome complex subunit 2 (506 aa).

Positions 252–420 (SEENWEEAQS…GTVVVESASD (169 aa)) constitute a PCI domain. Residues 482-491 (SGHRFRRGGK) are compositionally biased toward basic residues. The interval 482–506 (SGHRFRRGGKGSKAGGGLGMKTGLF) is disordered. Gly residues predominate over residues 492–506 (GSKAGGGLGMKTGLF).

Belongs to the CSN2 family. In terms of assembly, component of the COP9 signalosome (CSN) complex.

Its subcellular location is the cytoplasm. It is found in the nucleus. Its function is as follows. Component of the COP9 signalosome (CSN) complex that acts as an regulator of the ubiquitin (Ubl) conjugation pathway by mediating the deneddylation of the cullin subunit of SCF-type E3 ubiquitin-protein ligase complexes. The CSN complex seems to link protein degradation to sexual development. Required for fruit body formation. This Emericella nidulans (strain FGSC A4 / ATCC 38163 / CBS 112.46 / NRRL 194 / M139) (Aspergillus nidulans) protein is COP9 signalosome complex subunit 2 (csnB).